We begin with the raw amino-acid sequence, 144 residues long: Large ribosomal subunit protein uL13 (144 aa).

The disordered stretch occupies residues 125-144 (YRGPEHPHQAQKPQPLEVKA).

It belongs to the universal ribosomal protein uL13 family. Part of the 50S ribosomal subunit.

In terms of biological role, this protein is one of the early assembly proteins of the 50S ribosomal subunit, although it is not seen to bind rRNA by itself. It is important during the early stages of 50S assembly. This is Large ribosomal subunit protein uL13 from Aquifex aeolicus (strain VF5).